Reading from the N-terminus, the 1484-residue chain is Ral GTPase-activating protein subunit beta (1484 aa).

Disordered stretches follow at residues Pro-355–Arg-437 and Glu-699–Glu-728. Ser-359 is modified (phosphoserine). 2 positions are modified to phosphothreonine: Thr-363 and Thr-379. Polar residues-rich tracts occupy residues Ser-369–Pro-381, Asn-392–Glu-428, and Asn-701–Pro-725. 2 positions are modified to phosphoserine: Ser-421 and Ser-710. The residue at position 724 (Thr-724) is a Phosphothreonine. Residues Ile-1138–Ile-1382 form the Rap-GAP domain. Ser-1275 is modified (phosphoserine). The segment at Pro-1297–Pro-1325 is disordered. Low complexity predominate over residues Ser-1302–Ser-1313.

Component of the heterodimeric RalGAP1 complex with RALGAPA1 and of the heterodimeric RalGAP2 complex with RALGAPA2. Heterodimerization is required for activity. In terms of tissue distribution, abundantly expressed in testis, pancreas, lung, thymus, brown fat, and white fat. Expressed at lower levels in the brain.

In terms of biological role, non-catalytic subunit of the heterodimeric RalGAP1 and RalGAP2 complexes which act as GTPase activators for the Ras-like small GTPases RALA and RALB. The protein is Ral GTPase-activating protein subunit beta (Ralgapb) of Mus musculus (Mouse).